A 61-amino-acid polypeptide reads, in one-letter code: Small ribosomal subunit protein uS14 (61 aa).

Residues C24, C27, C40, and C43 each coordinate Zn(2+).

This sequence belongs to the universal ribosomal protein uS14 family. Zinc-binding uS14 subfamily. In terms of assembly, part of the 30S ribosomal subunit. Contacts proteins S3 and S10. The cofactor is Zn(2+).

Its function is as follows. Binds 16S rRNA, required for the assembly of 30S particles and may also be responsible for determining the conformation of the 16S rRNA at the A site. In Brevibacillus brevis (strain 47 / JCM 6285 / NBRC 100599), this protein is Small ribosomal subunit protein uS14.